Reading from the N-terminus, the 319-residue chain is Cytochrome f (319 aa).

The N-terminal stretch at 1 to 34 (MQNRNTYDLKKKMTRLISVLVMIHIITRTSISNA) is a signal peptide. Positions 35, 55, 58, and 59 each coordinate heme. A helical membrane pass occupies residues 285–304 (VKGLLLFLASVILAQIFLVL).

Belongs to the cytochrome f family. As to quaternary structure, the 4 large subunits of the cytochrome b6-f complex are cytochrome b6, subunit IV (17 kDa polypeptide, petD), cytochrome f and the Rieske protein, while the 4 small subunits are PetG, PetL, PetM and PetN. The complex functions as a dimer. The cofactor is heme.

It is found in the plastid. The protein resides in the chloroplast thylakoid membrane. Component of the cytochrome b6-f complex, which mediates electron transfer between photosystem II (PSII) and photosystem I (PSI), cyclic electron flow around PSI, and state transitions. The chain is Cytochrome f (petA) from Picea abies (Norway spruce).